The primary structure comprises 920 residues: Probable transport protein MmpL7 (920 aa).

The next 12 helical transmembrane spans lie at 44–64 (LLVV…LTFT), 210–230 (ITAW…VLLL), 241–261 (AIVL…AAVV), 271–291 (VFSW…ATML), 311–331 (LPAF…LLLA), 344–364 (LGVF…IALA), 389–409 (SASA…IIGM), 761–781 (LIHD…LASM), 790–810 (AVGV…IALW), 822–842 (VPLV…VAGI), 864–884 (GAVA…VLVS), and 888–908 (FSVL…LITV).

It belongs to the resistance-nodulation-cell division (RND) (TC 2.A.6) family. MmpL subfamily.

Its subcellular location is the cell membrane. The protein is Probable transport protein MmpL7 (mmpL7) of Mycobacterium bovis (strain ATCC BAA-935 / AF2122/97).